Consider the following 102-residue polypeptide: Small ribosomal subunit protein uS10 (102 aa).

Belongs to the universal ribosomal protein uS10 family. In terms of assembly, part of the 30S ribosomal subunit.

Functionally, involved in the binding of tRNA to the ribosomes. This is Small ribosomal subunit protein uS10 from Methylorubrum populi (strain ATCC BAA-705 / NCIMB 13946 / BJ001) (Methylobacterium populi).